Reading from the N-terminus, the 305-residue chain is Tyrosine recombinase XerC (305 aa).

Residues 4 to 95 (TSIQELINKW…AVKNFYKFLE (92 aa)) form the Core-binding (CB) domain. The 183-residue stretch at 116 to 298 (LLPKSLSEDD…SIKHLVSVYT (183 aa)) folds into the Tyr recombinase domain. Residues Arg-159, Lys-182, His-250, Arg-253, and His-276 contribute to the active site. Tyr-285 (O-(3'-phospho-DNA)-tyrosine intermediate) is an active-site residue.

This sequence belongs to the 'phage' integrase family. XerC subfamily. As to quaternary structure, forms a cyclic heterotetrameric complex composed of two molecules of XerC and two molecules of XerD.

It localises to the cytoplasm. Site-specific tyrosine recombinase, which acts by catalyzing the cutting and rejoining of the recombining DNA molecules. The XerC-XerD complex is essential to convert dimers of the bacterial chromosome into monomers to permit their segregation at cell division. It also contributes to the segregational stability of plasmids. The protein is Tyrosine recombinase XerC of Rickettsia canadensis (strain McKiel).